Consider the following 983-residue polypeptide: Ephrin type-A receptor 3 (983 aa).

The signal sequence occupies residues 1-20 (MDCHLSILVLLGCCVLSCSG). Over 21 to 540 (ELSPQPSNEV…SFSISGENSH (520 aa)) the chain is Extracellular. Residues 29–206 (EVNLLDSKTI…YFKKCPFTVK (178 aa)) enclose the Eph LBD domain. N-linked (GlcNAc...) asparagine glycosylation is found at asparagine 231, asparagine 336, asparagine 390, asparagine 403, and asparagine 492. Fibronectin type-III domains lie at 324–434 (PPSA…TNQA) and 435–530 (APSP…TSPD). A helical membrane pass occupies residues 541–564 (VVMIAISAAVAIIVLTVVTYVLVG). Over 565–983 (RFCGYHKSKH…TQSKNGPVPV (419 aa)) the chain is Cytoplasmic. Phosphotyrosine; by autocatalysis is present on residues tyrosine 596 and tyrosine 602. One can recognise a Protein kinase domain in the interval 621–882 (ISIDKVVGAG…QIVSILDKLI (262 aa)). Residues 628-633 (GAGEFG), lysine 653, and 700-706 (EYMENGS) each bind ATP. At tyrosine 701 the chain carries Phosphotyrosine; by autocatalysis. Aspartate 746 acts as the Proton acceptor in catalysis. 750-751 (RN) is a binding site for ATP. The residue at position 779 (tyrosine 779) is a Phosphotyrosine; by autocatalysis. Residues 911–975 (ATFHTTGDWL…ISTIKALETQ (65 aa)) enclose the SAM domain. Residue tyrosine 937 is modified to Phosphotyrosine. The PDZ-binding signature appears at 981–983 (VPV).

It belongs to the protein kinase superfamily. Tyr protein kinase family. Ephrin receptor subfamily. As to quaternary structure, heterotetramer upon binding of the ligand. The heterotetramer is composed of an ephrin dimer and a receptor dimer. Oligomerization is probably required to induce biological responses. Forms a ternary EFNA5-EPHA3-ADAM10 complex mediating EFNA5 extracellular domain shedding by ADAM10 which regulates the EFNA5-EPHA3 complex internalization and function. Interacts (phosphorylated) with PTPN1; dephosphorylates EPHA3 and may regulate its trafficking and function. Interacts (phosphorylated) with CRK; mediates EFNA5-EPHA3 signaling through RHOA GTPase activation. Interacts with NCK1 (via SH2 domain); mediates EFNA5-EPHA3 signaling. Autophosphorylates upon activation by EFNA5. Phosphorylation on Tyr-602 mediates interaction with NCK1. Dephosphorylated by PTPN1. In terms of tissue distribution, greatest levels of expression occurring in the brain, also detected in testis. Expressed in myogenic progenitor cells.

It is found in the cell membrane. It localises to the secreted. It catalyses the reaction L-tyrosyl-[protein] + ATP = O-phospho-L-tyrosyl-[protein] + ADP + H(+). Receptor tyrosine kinase which binds promiscuously membrane-bound ephrin family ligands residing on adjacent cells, leading to contact-dependent bidirectional signaling into neighboring cells. The signaling pathway downstream of the receptor is referred to as forward signaling while the signaling pathway downstream of the ephrin ligand is referred to as reverse signaling. Highly promiscuous for ephrin-A ligands it binds preferentially EFNA5. Upon activation by EFNA5 regulates cell-cell adhesion, cytoskeletal organization and cell migration. Plays a role in cardiac cells migration and differentiation and regulates the formation of the atrioventricular canal and septum during development probably through activation by EFNA1. Involved in the retinotectal mapping of neurons. May also control the segregation but not the guidance of motor and sensory axons during neuromuscular circuit development. This chain is Ephrin type-A receptor 3 (Epha3), found in Mus musculus (Mouse).